We begin with the raw amino-acid sequence, 580 residues long: uncharacterized protein (580 aa).

Disordered regions lie at residues S161–D241, L256–D281, N325–K345, P472–D495, and S544–R564. Residues S192–D203 show a composition bias toward low complexity. 2 stretches are compositionally biased toward polar residues: residues T223–D241 and L256–K269. Positions V326–K341 are enriched in basic and acidic residues. Residues P481–D495 show a composition bias toward polar residues.

This is an uncharacterized protein from Schizosaccharomyces pombe (strain 972 / ATCC 24843) (Fission yeast).